The primary structure comprises 150 residues: Endoribonuclease YbeY (150 aa).

Zn(2+) contacts are provided by histidine 112, histidine 116, and histidine 122.

The protein belongs to the endoribonuclease YbeY family. The cofactor is Zn(2+).

Its subcellular location is the cytoplasm. Its function is as follows. Single strand-specific metallo-endoribonuclease involved in late-stage 70S ribosome quality control and in maturation of the 3' terminus of the 16S rRNA. This chain is Endoribonuclease YbeY, found in Bdellovibrio bacteriovorus (strain ATCC 15356 / DSM 50701 / NCIMB 9529 / HD100).